Here is a 427-residue protein sequence, read N- to C-terminus: Adenylosuccinate synthetase (427 aa).

Residues 12-18 (GDEGKGK) and 40-42 (GHT) contribute to the GTP site. The active-site Proton acceptor is the Asp13. Mg(2+) contacts are provided by Asp13 and Gly40. IMP-binding positions include 13–16 (DEGK), 38–41 (NAGH), Thr128, Arg142, Gln223, Thr238, and Arg302. The Proton donor role is filled by His41. 298-304 (VTTGRDR) serves as a coordination point for substrate. Residues Arg304, 330 to 332 (KLD), and 412 to 414 (GVG) each bind GTP.

The protein belongs to the adenylosuccinate synthetase family. Homodimer. Mg(2+) serves as cofactor.

The protein resides in the cytoplasm. The enzyme catalyses IMP + L-aspartate + GTP = N(6)-(1,2-dicarboxyethyl)-AMP + GDP + phosphate + 2 H(+). It functions in the pathway purine metabolism; AMP biosynthesis via de novo pathway; AMP from IMP: step 1/2. Plays an important role in the de novo pathway of purine nucleotide biosynthesis. Catalyzes the first committed step in the biosynthesis of AMP from IMP. The chain is Adenylosuccinate synthetase from Streptomyces griseus subsp. griseus (strain JCM 4626 / CBS 651.72 / NBRC 13350 / KCC S-0626 / ISP 5235).